A 517-amino-acid polypeptide reads, in one-letter code: Xaa-Pro dipeptidase (517 aa).

Mn(2+) is bound by residues Asp244, Asp255, His336, Glu381, and Glu420.

This sequence belongs to the peptidase M24B family. Bacterial-type prolidase subfamily. As to quaternary structure, monomer. Requires Mn(2+) as cofactor.

It carries out the reaction Xaa-L-Pro dipeptide + H2O = an L-alpha-amino acid + L-proline. It catalyses the reaction diisopropyl fluorophosphate + H2O = diisopropyl phosphate + fluoride + 2 H(+). The catalysed reaction is An aryl dialkyl phosphate + H2O = dialkyl phosphate + an aryl alcohol.. Functionally, splits dipeptides with a prolyl or hydroxyprolyl residue in the C-terminal position and a nonpolar amino acid at the N-terminal position. Also catalyzes the hydrolysis of toxic organophosphorus cholinesterase-inhibiting compounds including insecticide paraoxon and nerve gases such as diisopropylfluorophosphate (DFP), O-isopropyl methylphosphonofluoridate (sarin), O-pinacolyl methylphosphonofluoridate (soman), and O-cyclohexyl methylphosphonofluoridate. In Alteromonas sp, this protein is Xaa-Pro dipeptidase (pepQ).